We begin with the raw amino-acid sequence, 355 residues long: DNA polymerase IV (355 aa).

Residues 7–188 (IIHIDMDCFY…LPVRKLFGVG (182 aa)) form the UmuC domain. The Mg(2+) site is built by Asp-11 and Asp-106. Residue Glu-107 is part of the active site.

It belongs to the DNA polymerase type-Y family. Monomer. Requires Mg(2+) as cofactor.

The protein localises to the cytoplasm. The catalysed reaction is DNA(n) + a 2'-deoxyribonucleoside 5'-triphosphate = DNA(n+1) + diphosphate. Its function is as follows. Poorly processive, error-prone DNA polymerase involved in untargeted mutagenesis. Copies undamaged DNA at stalled replication forks, which arise in vivo from mismatched or misaligned primer ends. These misaligned primers can be extended by PolIV. Exhibits no 3'-5' exonuclease (proofreading) activity. May be involved in translesional synthesis, in conjunction with the beta clamp from PolIII. This is DNA polymerase IV from Legionella pneumophila (strain Lens).